A 244-amino-acid chain; its full sequence is RNA transcription, translation and transport factor protein (244 aa).

An N6-acetyllysine mark is found at Lys-20, Lys-62, and Lys-98.

This sequence belongs to the RTRAF family. Homodimer. Interacts with FAM98A (via N- and C-terminus). Interacts with NIN; which may prevent phosphorylation of NIN. Interacts with POLR2A. Component of a tRNA-splicing ligase complex with FAM98B, DDX1 and RTCB. In terms of assembly, (Microbial infection) Interacts with influenza A virus (IAV) RNA polymerase subunits PA, PB1 and PB2, and nucleocapsid NP. Associates with IAV polymerase complexes both in the nucleus and cytosol. Associates with IAV ribonucleoproteins (vRNP) packaged in virions. Interacts with hepatitis C virus core protein p19. As to expression, widely expressed. Expressed at high level in heart and skeletal muscle. Expressed at intermediate level in liver, pancreas, fetal brain and fetal lung. Weakly expressed in adult brain, adult lung, placenta, fetal liver and fetal kidney. Overexpressed in many brain tumors.

It localises to the nucleus. It is found in the cytoplasm. The protein resides in the cytosol. The protein localises to the perinuclear region. Its subcellular location is the cytoskeleton. It localises to the microtubule organizing center. It is found in the centrosome. In terms of biological role, RNA-binding protein involved in modulation of mRNA transcription by Polymerase II. Component of the tRNA-splicing ligase complex and is required for tRNA ligation. May be required for RNA transport. Functionally, (Microbial infection) In case of infection by influenza virus A (IVA), is involved in viral replication. This Homo sapiens (Human) protein is RNA transcription, translation and transport factor protein.